The sequence spans 348 residues: A-type ATP synthase subunit C (348 aa).

It belongs to the V-ATPase V0D/AC39 subunit family. In terms of assembly, has multiple subunits with at least A(3), B(3), C, D, E, F, H, I and proteolipid K(x).

The protein localises to the cell membrane. Component of the A-type ATP synthase that produces ATP from ADP in the presence of a proton gradient across the membrane. The polypeptide is A-type ATP synthase subunit C (Halorubrum lacusprofundi (strain ATCC 49239 / DSM 5036 / JCM 8891 / ACAM 34)).